Consider the following 396-residue polypeptide: Period circadian protein (396 aa).

Disordered stretches follow at residues 27–120, 164–188, 253–273, and 333–362; these read VTAP…APPV, LEYSGPGPGHGHGIKRGGSHSWEGE, GGNGNVGSGNGNNNQPSTNQY, and SPSSTNTNPNRPHKHAHVHNSSEKPSTSQA. Residues 93–114 show a composition bias toward gly residues; it reads GTSGTGNSGDGGGGGGANGTGS. The segment covering 253 to 262 has biased composition (gly residues); that stretch reads GGNGNVGSGN. A compositionally biased stretch (low complexity) spans 333-342; that stretch reads SPSSTNTNPN.

As to quaternary structure, forms a heterodimer with timeless (TIM); the complex then translocates into the nucleus. Phosphorylated with a circadian rhythmicity, probably by the double-time protein (dbt). Phosphorylation could be implicated in the stability of per monomer and in the formation of heterodimer per-tim.

It localises to the nucleus. The protein resides in the cytoplasm. The protein localises to the perinuclear region. Functionally, essential for biological clock functions. Determines the period length of circadian and ultradian rhythms; an increase in PER dosage leads to shortened circadian rhythms and a decrease leads to lengthened circadian rhythms. Essential for the circadian rhythmicity of locomotor activity, eclosion behavior, and for the rhythmic component of the male courtship song that originates in the thoracic nervous system. The biological cycle depends on the rhythmic formation and nuclear localization of the TIM-PER complex. Light induces the degradation of TIM, which promotes elimination of PER. Nuclear activity of the heterodimer coordinatively regulates PER and TIM transcription through a negative feedback loop. Behaves as a negative element in circadian transcriptional loop. Does not appear to bind DNA, suggesting indirect transcriptional inhibition. This Drosophila pavlovskiana (Fruit fly) protein is Period circadian protein (per).